A 400-amino-acid chain; its full sequence is Small ribosomal subunit protein bS1 (400 aa).

S1 motif domains are found at residues 17-87 (GDVV…VTYL), 107-173 (EEVV…LSRR), 194-262 (GDVV…LSLK), and 279-348 (GDVV…LSIK). The span at 351–366 (EERPAQEEGQKEEKRA) shows a compositional bias: basic and acidic residues. Residues 351–400 (EERPAQEEGQKEEKRAARPRRPRRQEKRDFELPETQTGFSMADLFGDIEL) are disordered.

The protein belongs to the bacterial ribosomal protein bS1 family. Post-translationally, phosphorylated.

Its function is as follows. Binds mRNA; thus facilitating recognition of the initiation point. It is needed to translate mRNA with a short Shine-Dalgarno (SD) purine-rich sequence. This Streptococcus pneumoniae (strain ATCC BAA-255 / R6) protein is Small ribosomal subunit protein bS1 (rpsA).